Here is a 332-residue protein sequence, read N- to C-terminus: UDP-N-acetylenolpyruvoylglucosamine reductase (332 aa).

In terms of domain architecture, FAD-binding PCMH-type spans 15-184 (IDVSAACFLE…TYVSFRLSKR (170 aa)). Residue R160 is part of the active site. S232 (proton donor) is an active-site residue. Residue E328 is part of the active site.

The protein belongs to the MurB family. It depends on FAD as a cofactor.

Its subcellular location is the cytoplasm. It catalyses the reaction UDP-N-acetyl-alpha-D-muramate + NADP(+) = UDP-N-acetyl-3-O-(1-carboxyvinyl)-alpha-D-glucosamine + NADPH + H(+). Its pathway is cell wall biogenesis; peptidoglycan biosynthesis. Its function is as follows. Cell wall formation. This chain is UDP-N-acetylenolpyruvoylglucosamine reductase, found in Bacteroides fragilis (strain ATCC 25285 / DSM 2151 / CCUG 4856 / JCM 11019 / LMG 10263 / NCTC 9343 / Onslow / VPI 2553 / EN-2).